The primary structure comprises 908 residues: MSVAATKSEISHNPGKMSVTSAVSGEKVEGDVQSRMKLFGAIQAFRDGRMPDNEQIGSVLEYAIGHSPVDLQKLSPEGRVLIEDFRDTLETLRMIVHEKNSDELFQNAVWSSYHGDVSKAKQDGVIPVSNEQAKQDGKTAASHIRVLITLFLTNSEARKLLKDFGIVGRDIFATAATKAADKSRPSQEKLDSVDQEAPSHEWIGADGKRLGPNETPDIQIKGPGGTQARYHPRDDPRDAQLVDDKGKTRSAGEAYNQAQEAKSDAQSKAQDLKSSARDYKETGKQQARSHAQDVAGNRDPNASLSEQKEQVKGAAYDKRDAANAQADQNLPDPNDEGNQEKARGKAAALRDRIPEEHRQKAADYIQKSKNFVNDELPEERRDQFIYRLKKVVVECQGHKDYQEAMTWLLDTLENYRGHAKHVANKGTESAQTVANDPAVGDSTIQFRTLLERFANGKSLDNVFSALDQIYTDVQNDSELREWFTTFNDYMHRVLLEPGYILDEDSDREARQLRESGRRFFQDKYKAHQELLFDELQVWLTAFGEDPLNVRLGDDIKRFCKDLLFNHEGNLTFKPKLWNDVRQVLLPMLLKQVSYVPIPRAEYSDNSIDLVIEDLILSGPNLFPNLVHIESFNSFSFSPYPKLNKTMDNQHHKFRLSLSQIQADIRDVAFAFRRKSGWPKLSDHGLADVVLAGKGISVDVELESIENRRDTVFKTNFIHVNIDTLKFSIRNSKHDLLYKFIKSTATGLIKRAITAAVQNAMHTALGHLDEQLVEVRNRVDEAKQSDETTRTQALKDLYSRKKESAQEKKAAADEKTGTFKIITDRDSQLNPELTHDGGKSWAKRAFKVEDAARTGKEWRSPAFNLIDPAHPAVTGQHHPAVQNADVESEKLKQRAEAAAPGVAAGTKRM.

Disordered regions lie at residues 1 to 24 and 177 to 359; these read MSVA…SAVS and TKAA…EHRQ. Basic and acidic residues-rich tracts occupy residues 179-192, 231-247, 261-283, 306-321, and 338-359; these read AADK…KLDS, HPRD…DKGK, AKSD…KETG, EQKE…KRDA, and NQEK…EHRQ. A coiled-coil region spans residues 255–282; it reads YNQAQEAKSDAQSKAQDLKSSARDYKET.

Post-translationally, palmitoylated.

In terms of biological role, may act as a negative regulator of mating during vegetative growth. This is Putative cell signaling protein HAM1 from Cryptococcus neoformans var. grubii serotype A (strain H99 / ATCC 208821 / CBS 10515 / FGSC 9487) (Filobasidiella neoformans var. grubii).